The primary structure comprises 70 residues: MPKSAIHPDWYPNAKVYCDGQLVMKVGATKPTLNVDIWSGNHPFYTGSQTIIDTEGRVERFMRKYGMETQ.

It belongs to the bacterial ribosomal protein bL31 family. Type A subfamily. As to quaternary structure, part of the 50S ribosomal subunit.

The protein resides in the plastid. It is found in the chloroplast. Functionally, binds the 23S rRNA. The polypeptide is Large ribosomal subunit protein bL31c (Emiliania huxleyi (Coccolithophore)).